Here is a 332-residue protein sequence, read N- to C-terminus: Putative peptide import ATP-binding protein BruAb2_1033 (332 aa).

Residues 11-261 form the ABC transporter domain; it reads LEVSNLSVDF…PLHPYTEGLL (251 aa). 47 to 54 lines the ATP pocket; that stretch reads GESGSGKS.

This sequence belongs to the ABC transporter superfamily. In terms of assembly, the complex is composed of two ATP-binding proteins (BruAb2_1033 and BruAb2_1034), two transmembrane proteins (BruAb2_1031 and BruAb2_1032) and a solute-binding protein (BruAb2_1030).

Its subcellular location is the cell inner membrane. Its function is as follows. Probably part of an ABC transporter complex that could be involved in peptide import. Probably responsible for energy coupling to the transport system. The chain is Putative peptide import ATP-binding protein BruAb2_1033 from Brucella abortus biovar 1 (strain 9-941).